Here is a 271-residue protein sequence, read N- to C-terminus: Ribosomal RNA small subunit methyltransferase I (271 aa).

It belongs to the methyltransferase superfamily. RsmI family.

It is found in the cytoplasm. The catalysed reaction is cytidine(1402) in 16S rRNA + S-adenosyl-L-methionine = 2'-O-methylcytidine(1402) in 16S rRNA + S-adenosyl-L-homocysteine + H(+). Its function is as follows. Catalyzes the 2'-O-methylation of the ribose of cytidine 1402 (C1402) in 16S rRNA. The polypeptide is Ribosomal RNA small subunit methyltransferase I (Campylobacter fetus subsp. fetus (strain 82-40)).